The chain runs to 403 residues: 5,7-dihydroxy-2-methylchromone synthase (403 aa).

A CoA-binding site is contributed by His-68. The active site involves Cys-174. Cys-174 bears the Cysteine sulfinic acid (-SO2H) mark. CoA contacts are provided by residues Leu-277, Ser-281, and 318 to 321; that span reads GGRA.

It belongs to the thiolase-like superfamily. Chalcone/stilbene synthases family. As to quaternary structure, homodimer.

It carries out the reaction 5 malonyl-CoA + 4 H(+) = 5,7-dihydroxy-2-methyl-4H-chromen-4-one + 5 CO2 + 5 CoA + H2O. Its pathway is secondary metabolite biosynthesis; flavonoid biosynthesis. In terms of biological role, catalyzes the iterative condensations of 5 molecules of malonyl-CoA to produce a pentaketide 5,7-dihydroxy-2-methylchromone. The sequence is that of 5,7-dihydroxy-2-methylchromone synthase from Aloe arborescens (Kidachi aloe).